Here is a 461-residue protein sequence, read N- to C-terminus: MLKEYRTVKEVVGPLMLVDQVDGVSFDELVEIELHNGEKRRGKVLEINKDKAMVQLFEGSAGINLKGAKVKFLGKPLELGVSEDMLGRVFDGLGNPKDGGPKIIPDKKLDINGIPINPVARNYPDEFIQTGVSAIDGLNTLVRGQKLPVFSGSGLPHAELAAQIARQAKVLNSDSKFAVVFAAIGTTFEEAQYFIDDFTKTGAIDRAVLFINLANDPAIERIATPRMALTAAEYLAFEKGMHVLVIMTDITNYCEALREVSAARKEVPGRRGYPGYLYTDLSTLYERAGRILGKEGSITQIPILTMPEDDKTHPIPDLTGYITEGQIILSRELYKKGIMPPIDVLPSLSRLKDKGIGKGKTREDHADTMNQLFSAYAQGKQAKELSVILGESALSDTDKLYAKFADAFEEEYVSQGFTTNRTIEETLNLGWKLLTILPKSELKRIRDEYLEKYLSKAEESK.

This sequence belongs to the ATPase alpha/beta chains family.

Functionally, produces ATP from ADP in the presence of a proton gradient across the membrane. The V-type beta chain is a regulatory subunit. In Clostridium botulinum (strain Langeland / NCTC 10281 / Type F), this protein is V-type ATP synthase beta chain.